The primary structure comprises 88 residues: Small ribosomal subunit protein bS20 (88 aa).

Positions Met-1 to Ser-23 are disordered.

This sequence belongs to the bacterial ribosomal protein bS20 family.

Binds directly to 16S ribosomal RNA. The chain is Small ribosomal subunit protein bS20 from Teredinibacter turnerae (strain ATCC 39867 / T7901).